A 224-amino-acid polypeptide reads, in one-letter code: Large ribosomal subunit protein uL11c (224 aa).

The transit peptide at 1–66 directs the protein to the chloroplast; the sequence is MAQPLVAAPS…SHRRLSIVAM (66 aa). N6,N6,N6-trimethyllysine occurs at positions 75 and 111.

As to quaternary structure, component of the chloroplast large ribosomal subunit (LSU). Mature 70S chloroplast ribosomes of higher plants consist of a small (30S) and a large (50S) subunit. The 30S small subunit contains 1 molecule of ribosomal RNA (16S rRNA) and 24 different proteins. The 50S large subunit contains 3 rRNA molecules (23S, 5S and 4.5S rRNA) and 33 different proteins.

The protein resides in the plastid. Its subcellular location is the chloroplast. Component of the chloroplast ribosome (chloro-ribosome), a dedicated translation machinery responsible for the synthesis of chloroplast genome-encoded proteins, including proteins of the transcription and translation machinery and components of the photosynthetic apparatus. The protein is Large ribosomal subunit protein uL11c (rpl11) of Spinacia oleracea (Spinach).